Reading from the N-terminus, the 508-residue chain is ATP synthase subunit alpha, chloroplastic (508 aa).

Gly-172–Thr-179 is an ATP binding site.

This sequence belongs to the ATPase alpha/beta chains family. As to quaternary structure, F-type ATPases have 2 components, CF(1) - the catalytic core - and CF(0) - the membrane proton channel. CF(1) has five subunits: alpha(3), beta(3), gamma(1), delta(1), epsilon(1). CF(0) has four main subunits: a, b, b' and c.

It localises to the plastid. The protein localises to the chloroplast thylakoid membrane. The catalysed reaction is ATP + H2O + 4 H(+)(in) = ADP + phosphate + 5 H(+)(out). Its function is as follows. Produces ATP from ADP in the presence of a proton gradient across the membrane. The alpha chain is a regulatory subunit. This chain is ATP synthase subunit alpha, chloroplastic, found in Angiopteris evecta (Mule's foot fern).